The following is a 167-amino-acid chain: Large ribosomal subunit protein uL10 (167 aa).

Belongs to the universal ribosomal protein uL10 family. In terms of assembly, part of the ribosomal stalk of the 50S ribosomal subunit. The N-terminus interacts with L11 and the large rRNA to form the base of the stalk. The C-terminus forms an elongated spine to which L12 dimers bind in a sequential fashion forming a multimeric L10(L12)X complex.

In terms of biological role, forms part of the ribosomal stalk, playing a central role in the interaction of the ribosome with GTP-bound translation factors. The protein is Large ribosomal subunit protein uL10 of Ligilactobacillus salivarius (strain UCC118) (Lactobacillus salivarius).